The chain runs to 371 residues: Transcription factor bHLH77 (371 aa).

3 disordered regions span residues 1–25 (MNMD…FGNG), 65–206 (SGGI…SLAE), and 352–371 (QSNN…KLEP). A compositionally biased stretch (polar residues) spans 85–96 (SQPTTQESNKSS). The segment covering 128-142 (SPASSSLTASNSKVS) has biased composition (low complexity). Residues 165-190 (GVEKCDSKGDNKDDAKPPEAPKDYIH) show a composition bias toward basic and acidic residues. The 51-residue stretch at 197-247 (QATDSHSLAERARREKISERMTLLQDLVPGCNRITGKAVMLDEIINYVQSL) folds into the bHLH domain.

In terms of assembly, homodimer. Interacts with IBH1. As to expression, expressed constitutively in roots, leaves, stems, and flowers.

Its subcellular location is the nucleus. The chain is Transcription factor bHLH77 (BHLH77) from Arabidopsis thaliana (Mouse-ear cress).